A 295-amino-acid chain; its full sequence is Sulfotransferase 1A3 (295 aa).

Residue 48 to 53 (KSGTTW) participates in 3'-phosphoadenylyl sulfate binding. Dopamine is bound by residues Asp86 and 106 to 108 (KSH). The Proton acceptor role is filled by His108. 3'-phosphoadenylyl sulfate contacts are provided by Arg130 and Ser138. Glu146 contributes to the dopamine binding site. 3'-phosphoadenylyl sulfate contacts are provided by residues Tyr193, 227 to 232 (TSFKEM), and 257 to 259 (RKG).

The protein belongs to the sulfotransferase 1 family. As to quaternary structure, homodimer. Post-translationally, the N-terminus is blocked. Liver, colon, kidney, lung, brain, spleen, small intestine, placenta and leukocyte.

It localises to the cytoplasm. It carries out the reaction a phenol + 3'-phosphoadenylyl sulfate = an aryl sulfate + adenosine 3',5'-bisphosphate + H(+). It catalyses the reaction 4-nitrophenol + 3'-phosphoadenylyl sulfate = 4-nitrophenyl sulfate + adenosine 3',5'-bisphosphate. The enzyme catalyses dopamine + 3'-phosphoadenylyl sulfate = dopamine 3-O-sulfate + adenosine 3',5'-bisphosphate + H(+). The catalysed reaction is dopamine + 3'-phosphoadenylyl sulfate = dopamine 4-O-sulfate + adenosine 3',5'-bisphosphate + H(+). It carries out the reaction serotonin + 3'-phosphoadenylyl sulfate = serotonin O-sulfate + adenosine 3',5'-bisphosphate + H(+). It catalyses the reaction (R)-adrenaline + 3'-phosphoadenylyl sulfate = (R)-adrenaline 4'-O-sulfate + adenosine 3',5'-bisphosphate + H(+). The enzyme catalyses (R)-noradrenaline + 3'-phosphoadenylyl sulfate = (R)-noradrenaline 4'-O-sulfate + adenosine 3',5'-bisphosphate + H(+). The catalysed reaction is 3,3',5-triiodo-L-thyronine + 3'-phosphoadenylyl sulfate = 3,3',5-triiodo-L-thyronine sulfate + adenosine 3',5'-bisphosphate + H(+). It carries out the reaction 3,3',5'-triiodo-L-thyronine + 3'-phosphoadenylyl sulfate = 3,3',5'-triiodo-L-thyronine sulfate + adenosine 3',5'-bisphosphate + H(+). It catalyses the reaction 3,3'-diiodo-L-thyronine + 3'-phosphoadenylyl sulfate = 3,3'-diiodo-L-thyronine sulfate + adenosine 3',5'-bisphosphate + H(+). The enzyme catalyses L-thyroxine + 3'-phosphoadenylyl sulfate = L-thyroxine sulfate + adenosine 3',5'-bisphosphate + H(+). Its function is as follows. Sulfotransferase that utilizes 3'-phospho-5'-adenylyl sulfate (PAPS) as sulfonate donor to catalyze the sulfate conjugation of phenolic monoamines (neurotransmitters such as dopamine, (R)-adrenaline/epinephrine, (R)-noradrenaline/norepinephrine and serotonin) and phenolic and catechol drugs. Catalyzes the sulfation of T4 (L-thyroxine/3,5,3',5'-tetraiodothyronine), T3 (3,5,3'-triiodothyronine), rT3 (3,3',5'-triiodothyronine) and 3,3'-T2 (3,3'-diiodothyronine), with a substrate preference of 3,3'-T2 &gt; rT3 &gt; T3 &gt; T4. This is Sulfotransferase 1A3 (SULT1A3) from Homo sapiens (Human).